A 154-amino-acid chain; its full sequence is Putative peroxiredoxin MT1643 (154 aa).

One can recognise a Thioredoxin domain in the interval 1 to 153 (MKTGDTVADF…ALATLRAIRS (153 aa)). Cys-44 serves as the catalytic Cysteine sulfenic acid (-SOH) intermediate. Cysteines 44 and 49 form a disulfide.

Belongs to the peroxiredoxin family. BCP/PrxQ subfamily. In terms of assembly, monomer.

The catalysed reaction is a hydroperoxide + [thioredoxin]-dithiol = an alcohol + [thioredoxin]-disulfide + H2O. Functionally, thiol-specific peroxidase that catalyzes the reduction of hydrogen peroxide and organic hydroperoxides to water and alcohols, respectively. Plays a role in cell protection against oxidative stress by detoxifying peroxides and as sensor of hydrogen peroxide-mediated signaling events. The sequence is that of Putative peroxiredoxin MT1643 (bcpB) from Mycobacterium tuberculosis (strain CDC 1551 / Oshkosh).